Reading from the N-terminus, the 132-residue chain is Replication enhancer protein (132 aa).

Belongs to the geminiviridae replication enhancer protein family. Homooligomer. Interacts with the replication-associated protein (REP). Interacts with host proliferating cell nuclear antigen (PCNA). Interacts with host retinoblastoma-related protein 1 (RBR1), and may thereby deregulate the host cell cycle. Oligomerization and interaction with PCNA are necessary for optimal replication enhancement.

In terms of biological role, increases viral DNA accumulation. Enhances infectivity and symptom expression. The polypeptide is Replication enhancer protein (Macroptilium lathyroides (Lima bean)).